A 442-amino-acid polypeptide reads, in one-letter code: Trigger factor (442 aa).

Residues 176-259 (GDFISLSLYV…VNAVIEISSP (84 aa)) enclose the PPIase FKBP-type domain.

Belongs to the FKBP-type PPIase family. Tig subfamily.

It is found in the cytoplasm. It carries out the reaction [protein]-peptidylproline (omega=180) = [protein]-peptidylproline (omega=0). Its function is as follows. Involved in protein export. Acts as a chaperone by maintaining the newly synthesized protein in an open conformation. Functions as a peptidyl-prolyl cis-trans isomerase. This is Trigger factor from Chlamydia trachomatis serovar A (strain ATCC VR-571B / DSM 19440 / HAR-13).